Consider the following 190-residue polypeptide: MAFIAKSFYDLSAISLDGEKVDFNTFRGRAVLIENVASLUGTTTRDFTQLNELQCRFPRRLVVLGFPCNQFGHQENCQNEEILNSLKYVRPGGGYQPTFTLVQKCEVNGQNEHPVFAYLKDKLPYPHDDPFSLMTDPKFIIWSPVCRSDVAWNFEKFLIGPEGEPFRRYSRTFPTINIEPDIKRLLKVAI.

Residue Sec40 is part of the active site. Sec40 is a non-standard amino acid (selenocysteine).

It belongs to the glutathione peroxidase family. As to quaternary structure, homotetramer.

Its subcellular location is the cytoplasm. The protein resides in the cytosol. It catalyses the reaction 2 glutathione + H2O2 = glutathione disulfide + 2 H2O. The catalysed reaction is a hydroperoxy polyunsaturated fatty acid + 2 glutathione = a hydroxy polyunsaturated fatty acid + glutathione disulfide + H2O. It carries out the reaction tert-butyl hydroperoxide + 2 glutathione = tert-butanol + glutathione disulfide + H2O. The enzyme catalyses cumene hydroperoxide + 2 glutathione = 2-phenylpropan-2-ol + glutathione disulfide + H2O. It catalyses the reaction (13S)-hydroperoxy-(9Z,11E)-octadecadienoate + 2 glutathione = (13S)-hydroxy-(9Z,11E)-octadecadienoate + glutathione disulfide + H2O. The catalysed reaction is (5S)-hydroperoxy-(6E,8Z,11Z,14Z)-eicosatetraenoate + 2 glutathione = (5S)-hydroxy-(6E,8Z,11Z,14Z)-eicosatetraenoate + glutathione disulfide + H2O. It carries out the reaction (12R)-hydroperoxy-(5Z,8Z,10E,14Z)-eicosatetraenoate + 2 glutathione = (12R)-hydroxy-(5Z,8Z,10E,14Z)-eicosatetraenoate + glutathione disulfide + H2O. The enzyme catalyses (15S)-hydroperoxy-(5Z,8Z,11Z,13E)-eicosatetraenoate + 2 glutathione = (15S)-hydroxy-(5Z,8Z,11Z,13E)-eicosatetraenoate + glutathione disulfide + H2O. In terms of biological role, catalyzes the reduction of hydroperoxides in a glutathione-dependent manner thus regulating cellular redox homeostasis. Can reduce small soluble hydroperoxides such as H2O2, cumene hydroperoxide and tert-butyl hydroperoxide, as well as several fatty acid-derived hydroperoxides. Cannot reduce phosphatidycholine hydroperoxide. The polypeptide is Glutathione peroxidase 2 (GPX2) (Sapajus apella (Brown-capped capuchin)).